Reading from the N-terminus, the 467-residue chain is Proton extrusion protein PxcA (467 aa).

Residues 183–205 (TSPPQLIRPRTEQNKKPRGKADT) form a disordered region. Residues 191–203 (PRTEQNKKPRGKA) show a composition bias toward basic and acidic residues. The next 4 membrane-spanning stretches (helical) occupy residues 249 to 269 (FILL…ALIV), 352 to 372 (IFSV…IMVL), 391 to 411 (IIIL…WEVI), and 427 to 447 (FIFL…KYWI).

It belongs to the CemA family.

The protein resides in the cell inner membrane. Functionally, required for H(+) efflux immediately after light irradiation to form a rapid H(+) concentration gradient across the thylakoid membranes. Together with PxcL, contributes to transient H(+) uptake following dark to light transition. The sequence is that of Proton extrusion protein PxcA from Trichormus variabilis (strain ATCC 29413 / PCC 7937) (Anabaena variabilis).